A 320-amino-acid polypeptide reads, in one-letter code: GTP 3',8-cyclase (320 aa).

The Radical SAM core domain maps to 5–225; sequence QFDRKINYLR…IQLIKKDEKA (221 aa). Residue arginine 14 coordinates GTP. Residues cysteine 21 and cysteine 25 each contribute to the [4Fe-4S] cluster site. Tyrosine 27 serves as a coordination point for S-adenosyl-L-methionine. Position 28 (cysteine 28) interacts with [4Fe-4S] cluster. Arginine 64 is a binding site for GTP. Glycine 68 contacts S-adenosyl-L-methionine. Threonine 95 serves as a coordination point for GTP. Position 119 (serine 119) interacts with S-adenosyl-L-methionine. A GTP-binding site is contributed by lysine 155. Position 189 (methionine 189) interacts with S-adenosyl-L-methionine. Residues cysteine 248 and cysteine 251 each coordinate [4Fe-4S] cluster. 253-255 contacts GTP; that stretch reads RIR. Cysteine 265 serves as a coordination point for [4Fe-4S] cluster.

Belongs to the radical SAM superfamily. MoaA family. As to quaternary structure, monomer and homodimer. It depends on [4Fe-4S] cluster as a cofactor.

The catalysed reaction is GTP + AH2 + S-adenosyl-L-methionine = (8S)-3',8-cyclo-7,8-dihydroguanosine 5'-triphosphate + 5'-deoxyadenosine + L-methionine + A + H(+). The protein operates within cofactor biosynthesis; molybdopterin biosynthesis. Functionally, catalyzes the cyclization of GTP to (8S)-3',8-cyclo-7,8-dihydroguanosine 5'-triphosphate. This chain is GTP 3',8-cyclase, found in Campylobacter jejuni subsp. doylei (strain ATCC BAA-1458 / RM4099 / 269.97).